We begin with the raw amino-acid sequence, 364 residues long: MYIKNVHLINFRNYDDMYLELSPNTNIFVGNNAQGKTNILESIYYSSIGKSHRTNKDKDLIKWDKNNTYLRTYVSRERLDKTIDINIFKNGKKAITVNKIKIKKISELMGNLNVVMFSPEDLRIIKDSPGNRRKFLDIELCKINNVYYHDLVQYNKILSERNTALKNWNNKINDIIDIYDEQLSKYGAFIIKERNKYLDKLNIIGKNIHKKITNDLEDINFRYLTNIKDFDNTEKELLIVLKKNRKKDLERNSTSIGPHRDDFEVSINNIDTRIFGSQGQQRTAVLTLKFASLEIIKNIIGEYPVLLLDDVLSELDSNRQKFVLNSIDKIQTIITCTGIEEIDKYLDKKQSQLYLVNNGKIKRV.

Residue 30 to 37 (GNNAQGKT) coordinates ATP.

This sequence belongs to the RecF family.

The protein resides in the cytoplasm. Functionally, the RecF protein is involved in DNA metabolism; it is required for DNA replication and normal SOS inducibility. RecF binds preferentially to single-stranded, linear DNA. It also seems to bind ATP. This chain is DNA replication and repair protein RecF, found in Clostridium botulinum (strain Okra / Type B1).